We begin with the raw amino-acid sequence, 1026 residues long: Lon protease homolog, mitochondrial (1026 aa).

Residues 1 to 29 (MLGTRVTRAVYTRAPLKLQLRALGLHRRY) constitute a mitochondrion transit peptide. Disordered stretches follow at residues 29–55 (YVHN…DKKL) and 185–206 (ASEE…DKVS). The region spanning 62–345 (MLALPISRRP…KSLLVLKKEL (284 aa)) is the Lon N-terminal domain. Residues 185–194 (ASEETKDEET) show a composition bias toward acidic residues. Over residues 195–206 (VDKTESATDKVS) the composition is skewed to basic and acidic residues. Position 497-504 (497-504 (GPPGVGKT)) interacts with ATP. Residues 711-785 (TEPLVSTSEE…EEEEDTSMIV (75 aa)) form a disordered region. The span at 714–737 (LVSTSEEPQLSQTNQNISSSSAED) shows a compositional bias: polar residues. The 187-residue stretch at 815–1001 (TTPPGVIMGL…DDIYKRLFSG (187 aa)) folds into the Lon proteolytic domain. Residues Ser907 and Lys950 contribute to the active site.

Belongs to the peptidase S16 family. As to quaternary structure, homohexamer or homoheptamer. Organized in a ring with a central cavity.

The protein resides in the mitochondrion matrix. It catalyses the reaction Hydrolysis of proteins in presence of ATP.. ATP-dependent serine protease that mediates the selective degradation of misfolded, unassembled or oxidatively damaged polypeptides as well as certain short-lived regulatory proteins in the mitochondrial matrix. May also have a chaperone function in the assembly of inner membrane protein complexes. Participates in the regulation of mitochondrial gene expression and in the maintenance of the integrity of the mitochondrial genome. Binds to mitochondrial DNA in a site-specific manner. The sequence is that of Lon protease homolog, mitochondrial from Candida glabrata (strain ATCC 2001 / BCRC 20586 / JCM 3761 / NBRC 0622 / NRRL Y-65 / CBS 138) (Yeast).